Consider the following 316-residue polypeptide: Ribosomal protein L11 methyltransferase (316 aa).

Residues T162, G183, D205, and N248 each contribute to the S-adenosyl-L-methionine site.

It belongs to the methyltransferase superfamily. PrmA family.

Its subcellular location is the cytoplasm. The enzyme catalyses L-lysyl-[protein] + 3 S-adenosyl-L-methionine = N(6),N(6),N(6)-trimethyl-L-lysyl-[protein] + 3 S-adenosyl-L-homocysteine + 3 H(+). In terms of biological role, methylates ribosomal protein L11. The protein is Ribosomal protein L11 methyltransferase of Levilactobacillus brevis (strain ATCC 367 / BCRC 12310 / CIP 105137 / JCM 1170 / LMG 11437 / NCIMB 947 / NCTC 947) (Lactobacillus brevis).